The chain runs to 456 residues: Histidine--tRNA ligase (456 aa).

A disordered region spans residues 1–20 (MTQSENVAAAGGAKTEPKVR).

This sequence belongs to the class-II aminoacyl-tRNA synthetase family. In terms of assembly, homodimer.

Its subcellular location is the cytoplasm. It catalyses the reaction tRNA(His) + L-histidine + ATP = L-histidyl-tRNA(His) + AMP + diphosphate + H(+). In Cupriavidus necator (strain ATCC 17699 / DSM 428 / KCTC 22496 / NCIMB 10442 / H16 / Stanier 337) (Ralstonia eutropha), this protein is Histidine--tRNA ligase.